Here is a 307-residue protein sequence, read N- to C-terminus: RHOMBOID-like protein 6, mitochondrial (307 aa).

A mitochondrion-targeting transit peptide spans M1–F62. 6 helical membrane passes run W105–I125, I136–Q156, I159–L179, A191–V211, F214–P234, and L262–F282. S164 (nucleophile) is an active-site residue. H216 (charge relay system) is an active-site residue.

It belongs to the peptidase S54 family.

The protein resides in the mitochondrion membrane. The enzyme catalyses Cleaves type-1 transmembrane domains using a catalytic dyad composed of serine and histidine that are contributed by different transmembrane domains.. Probable rhomboid-type serine protease that catalyzes intramembrane proteolysis. Might be involved in response to abiotic stimuli. The sequence is that of RHOMBOID-like protein 6, mitochondrial from Arabidopsis thaliana (Mouse-ear cress).